Here is a 72-residue protein sequence, read N- to C-terminus: Dermaseptin-A4 (72 aa).

An N-terminal signal peptide occupies residues 1–22 (MAFLKKSLFLVLFLGMVSLSIC). Positions 23-41 (EEEKREEENEQEDDEQSEE) are excised as a propeptide. The disordered stretch occupies residues 24–43 (EEKREEENEQEDDEQSEEKR). The segment covering 30 to 39 (ENEQEDDEQS) has biased composition (acidic residues). Alanine 69 carries the alanine amide modification. Positions 71–72 (EQ) are excised as a propeptide.

Belongs to the frog skin active peptide (FSAP) family. Dermaseptin subfamily. In terms of tissue distribution, expressed by the skin glands.

Its subcellular location is the secreted. Possesses a potent antimicrobial activity against Gram-positive and Gram-negative bacteria. Probably acts by disturbing membrane functions with its amphipathic structure. The sequence is that of Dermaseptin-A4 from Agalychnis annae (Blue-sided leaf frog).